We begin with the raw amino-acid sequence, 647 residues long: Chaperone protein DnaK (647 aa).

T200 bears the Phosphothreonine; by autocatalysis mark. Low complexity predominate over residues 611–631 (AGEQGAAGAAGAGAQQQAQPQ). The segment at 611–647 (AGEQGAAGAAGAGAQQQAQPQDDNVVDAEFKEVNDKK) is disordered. Residues 638–647 (AEFKEVNDKK) show a composition bias toward basic and acidic residues.

This sequence belongs to the heat shock protein 70 family.

Functionally, acts as a chaperone. In Cupriavidus taiwanensis (strain DSM 17343 / BCRC 17206 / CCUG 44338 / CIP 107171 / LMG 19424 / R1) (Ralstonia taiwanensis (strain LMG 19424)), this protein is Chaperone protein DnaK.